The chain runs to 185 residues: Guanylate kinase (185 aa).

Positions 4–181 constitute a Guanylate kinase-like domain; that stretch reads GALYVVSGPS…ACNDLISIIE (178 aa). 11–18 contacts ATP; it reads GPSGAGKS.

It belongs to the guanylate kinase family.

The protein localises to the cytoplasm. It catalyses the reaction GMP + ATP = GDP + ADP. Its function is as follows. Essential for recycling GMP and indirectly, cGMP. This Fusobacterium nucleatum subsp. nucleatum (strain ATCC 25586 / DSM 15643 / BCRC 10681 / CIP 101130 / JCM 8532 / KCTC 2640 / LMG 13131 / VPI 4355) protein is Guanylate kinase.